The primary structure comprises 187 residues: Frequenin-1 (187 aa).

The N-myristoyl glycine moiety is linked to residue G2. 4 consecutive EF-hand domains span residues 24-59 (EKEIRQWHKGFLKDCPNGLLTEQGFIKIYKQFFPQG), 60-95 (DPSKFASLVFRVFDENNDGSIEFEEFIRALSVTSKG), 96-131 (NLDEKLQWAFRLYDVDNDGYITREEMYNIVDAIYQM), and 143-178 (TPQKRVDKIFDQMDKNHDGKLTLEEFREGSKADPRI). Ca(2+) contacts are provided by D73, N75, D77, S79, E84, D109, D111, D113, Y115, E120, D156, N158, D160, K162, and E167.

This sequence belongs to the recoverin family. In terms of assembly, in contrast to Frq2, does not interact with ric8a. In terms of tissue distribution, enriched in synapses, such as the motor nerve endings at neuromuscular junctions. In the embryo, highly expressed in the ventral ganglia.

The protein localises to the cytoplasm. Functionally, ca(2+)-dependent modulation of synaptic efficacy. Also plays a role in axon terminal morphology. The chain is Frequenin-1 (Frq1) from Drosophila melanogaster (Fruit fly).